The sequence spans 290 residues: Festuclavine dehydrogenase easG (290 aa).

It belongs to the fgaFS/easG family.

It catalyses the reaction festuclavine + NAD(+) = 6,8-dimethyl-6,7-didehydroergoline + NADH + H(+). It functions in the pathway alkaloid biosynthesis; ergot alkaloid biosynthesis. Functionally, festuclavine dehydrogenase; part of the gene cluster that mediates the biosynthesis of fumiclavanine C, a fungal ergot alkaloid. DmaW catalyzes the first step of ergot alkaloid biosynthesis by condensing dimethylallyl diphosphate (DMAP) and tryptophan to form 4-dimethylallyl-L-tryptophan. The second step is catalyzed by the methyltransferase easF that methylates 4-dimethylallyl-L-tryptophan in the presence of S-adenosyl-L-methionine, resulting in the formation of 4-dimethylallyl-L-abrine. The catalase easC and the FAD-dependent oxidoreductase easE then transform 4-dimethylallyl-L-abrine to chanoclavine-I which is further oxidized by EasD in the presence of NAD(+), resulting in the formation of chanoclavine-I aldehyde. EasA reduces chanoclavine-I aldehyde to dihydrochanoclavine-I aldehyde that spontaneously dehydrates to form 6,8-dimethyl-6,7-didehydroergoline. EasG then catalyzes the reduction of 6,8-dimethyl-6,7-didehydroergoline to form festuclavine. Hydrolysis of festuclavine by easM then leads to the formation of fumigaclavine B which is in turn acetylated by easN to fumigaclavine A. Finally, easL catalyzes the conversion of fumigaclavine A into fumigaclavine C by attaching a dimethylallyl moiety to C-2 of the indole nucleus. This chain is Festuclavine dehydrogenase easG, found in Aspergillus fumigatus (strain ATCC MYA-4609 / CBS 101355 / FGSC A1100 / Af293) (Neosartorya fumigata).